We begin with the raw amino-acid sequence, 174 residues long: Negative modulator of initiation of replication (174 aa).

Belongs to the SeqA family. In terms of assembly, homodimer. Polymerizes to form helical filaments.

The protein localises to the cytoplasm. Its function is as follows. Negative regulator of replication initiation, which contributes to regulation of DNA replication and ensures that replication initiation occurs exactly once per chromosome per cell cycle. Binds to pairs of hemimethylated GATC sequences in the oriC region, thus preventing assembly of replication proteins and re-initiation at newly replicated origins. Repression is relieved when the region becomes fully methylated. This is Negative modulator of initiation of replication from Pseudoalteromonas atlantica (strain T6c / ATCC BAA-1087).